The following is a 655-amino-acid chain: MEHIRTTKVEQVKLLDRFSTNNKSLTGTLYLTATHLLFIDAHQKETWILHHHIASVEKLALTTSGCPLVIQCKNFRIVHFIVPRERDCHDIYNSLLQLSKQAKYEDLYAFSYNPKQNDTERLNGWQLIDLAAEYERMGVPNANWQLSDANREYKVCETYPRELYVPRTASRPVIVGSSNFRSKGRLPVLSYCQQGTEAAICRCSQPLSGFSARCLEDEHLLQAISKANPGNRYMYVVDTRPKLRMQSWWDTQKDIGRIIVRISSKIWNDEKIRESDEKKRLNAMANRAAGKGYENEDNYSNIRFQFVGIENIHVMRSSLQKLLEVNGSKGLSVNDFYSGLESSGWLRHIKAVLDAAIFLAKAIVVENASVLVHCSDGWDRTSQVCSLGSLLLDSYYRTMKGFMVLIEKDWISFGHKFSERCGHLDGDPKEVSPVFTQFLECVWHLTEQFPQAFEFNEAFLLQIHEHIHSCQFGNFLGNCQKEREELRLKEKTYSLWPFLLADKKKYLNPLYSSKSQRLTVLEPNTASFNFKFWRNMYHQFDRTLHPRQSVLNIIMNMNEQNKQLEEDVKDLEAKIKQCKSGILTKDLLHAVHPESPSLKTSLCLKEQSLLPVKDTLRAVEGSSPADNRYCDYTEEFSKSEPAVVSLEYGVARMTC.

Positions 1–101 (MEHIRTTKVE…YNSLLQLSKQ (101 aa)) constitute a GRAM domain. The interval 2–141 (EHIRTTKVEQ…AEYERMGVPN (140 aa)) is interaction with RAB1B. Phosphotyrosine is present on Y108. Positions 124–537 (GWQLIDLAAE…FNFKFWRNMY (414 aa)) constitute a Myotubularin phosphatase domain. N286, N311, and I312 together coordinate a 1,2-diacyl-sn-glycero-3-phospho-(1D-myo-inositol-3,5-bisphosphate). Residues N286, N311, and I312 each coordinate a 1,2-diacyl-sn-glycero-3-phospho-(1D-myo-inositol-3-phosphate). The active-site Phosphocysteine intermediate is the C374. A 1,2-diacyl-sn-glycero-3-phospho-(1D-myo-inositol-3,5-bisphosphate)-binding residues include S375, D376, G377, W378, D379, R380, K416, and R420. A 1,2-diacyl-sn-glycero-3-phospho-(1D-myo-inositol-3-phosphate)-binding residues include S375, D376, G377, W378, D379, and R380. Residue R420 coordinates a 1,2-diacyl-sn-glycero-3-phospho-(1D-myo-inositol-3-phosphate). The stretch at 547-581 (RQSVLNIIMNMNEQNKQLEEDVKDLEAKIKQCKSG) forms a coiled coil. S595, S623, and S645 each carry phosphoserine.

Belongs to the protein-tyrosine phosphatase family. Non-receptor class myotubularin subfamily. As to quaternary structure, homodimer. Heterodimer (via C-terminus) with MTMR9 (via C-terminus). Interacts with ALKBH4. Interacts with KCNN4. Interacts (via GRAM domain) with RAB1B (in GDP-bound form); the interaction regulates MTMR6 recruitment to the endoplasmic reticulum-Golgi intermediate compartment.

It localises to the cytoplasm. Its subcellular location is the endoplasmic reticulum. It is found in the cell projection. The protein localises to the ruffle membrane. The protein resides in the endoplasmic reticulum-Golgi intermediate compartment. It localises to the perinuclear region. It carries out the reaction a 1,2-diacyl-sn-glycero-3-phospho-(1D-myo-inositol-3,5-bisphosphate) + H2O = a 1,2-diacyl-sn-glycero-3-phospho-(1D-myo-inositol-5-phosphate) + phosphate. The enzyme catalyses a 1,2-diacyl-sn-glycero-3-phospho-(1D-myo-inositol-3-phosphate) + H2O = a 1,2-diacyl-sn-glycero-3-phospho-(1D-myo-inositol) + phosphate. It catalyses the reaction 1,2-dioctanoyl-sn-glycero-3-phospho-(1D-myo-inositol-3,5-bisphosphate) + H2O = 1,2-dioctanoyl-sn-glycero-3-phospho-(1D-myo-inositol-5-phosphate) + phosphate. The catalysed reaction is 1,2-dioctanoyl-sn-glycero-3-phospho-(1-D-myo-inositol-3-phosphate) + H2O = 1,2-dioctanoyl-sn-glycero-3-phospho-(1D-myo-inositol) + phosphate. With respect to regulation, allosterically activated by phosphatidylserine and/or phosphatidylinositol 4-phosphate (PtdIns(4)P), and phosphatidylinositol 5-phosphate (PtdIns(5)P). Interaction with MTMR9 increases catalytic activity towards phosphatidylinositol 3,5-bisphosphate. In terms of biological role, lipid phosphatase that specifically dephosphorylates the D-3 position of phosphatidylinositol 3-phosphate and phosphatidylinositol 3,5-bisphosphate, generating phosphatidylinositol and phosphatidylinositol 5-phosphate. Binds with high affinity to phosphatidylinositol 3,5-bisphosphate (PtdIns(3,5)P2) but also to phosphatidylinositol 3-phosphate (PtdIns(3)P), phosphatidylinositol 4-phosphate (PtdIns(4)P), and phosphatidylinositol 5-phosphate (PtdIns(5)P), phosphatidic acid and phosphatidylserine. Negatively regulates ER-Golgi protein transport. Probably in association with MTMR9, plays a role in the late stages of macropinocytosis by dephosphorylating phosphatidylinositol 3-phosphate in membrane ruffles. Acts as a negative regulator of KCNN4/KCa3.1 channel activity in CD4(+) T-cells possibly by decreasing intracellular levels of phosphatidylinositol 3-phosphate. Negatively regulates proliferation of reactivated CD4(+) T-cells. In complex with MTMR9, negatively regulates DNA damage-induced apoptosis. The formation of the MTMR6-MTMR9 complex stabilizes both MTMR6 and MTMR9 protein levels. This is Phosphatidylinositol-3,5-bisphosphate 3-phosphatase MTMR6 from Rattus norvegicus (Rat).